Consider the following 619-residue polypeptide: MAGPGVPGAPAARWKRHIVRQLRLRDRTQKALFLELVPAYNHLLEKAELLDKFSKKLQPEPNSVTPTTHQGPWEESELDSDQVPSLVALRVKWQEEEEGLRLVCGEMAYQVVEKGAALGTLESELQQRQSRLAALEARVAQLREARAQQAQQVEEWRAQNAVQRAAYEALRAHVGLREAALRRLQEEARDLLERLVQRKARAAAERNLRNERRERAKQARVSQELKKAAKRTVSISEGPDTLGDGMRERRETLALAPEPEPLEKEACEKWKRPFRSASATSLTLSHCVDVVKGLLDFKKRRGHSIGGAPEQRYQIIPVCVAARLPTRAQDVLDAHLSEVNAVRFGPNSSLLATGGADRLIHLWNVVGSRLEANQTLEGAGGSITSVDFDPSGYQVLAATYNQAAQLWKVGEAQSKETLSGHKDKVTAAKFKLTRHQAVTGSRDRTVKEWDLGRAYCSRTINVLSYCNDVVCGDHIIISGHNDQKIRFWDSRGPHCTQVIPVQGRVTSLSLSHDQLHLLSCSRDNTLKVIDLRVSNIRQVFRADGFKCGSDWTKAVFSPDRSYALAGSCDGALYIWDVDTGKLESRLQGPHCAAVNAVAWCYSGSHMVSVDQGRKVVLWQ.

Residues 57–78 are disordered; that stretch reads LQPEPNSVTPTTHQGPWEESEL. Residues 60–70 show a composition bias toward polar residues; sequence EPNSVTPTTHQ. Positions 116–227 form a coiled coil; it reads AALGTLESEL…QARVSQELKK (112 aa). WD repeat units lie at residues 334-373, 378-417, 420-454, 455-498, 500-539, 546-585, and 589-619; these read AHLS…LEAN, GAGG…SKET, GHKD…LGRA, YCSR…CTQV, PVQG…IRQV, KCGS…LESR, and PHCA…VLWQ.

Belongs to the WD repeat ATG16 family. Homooligomer. Heterooligomer with ATG16L1. Interacts with ATG5. Self-oligomerizes to form a 800-kDa complex composed of ATG12-ATG5 and ATG16L2. Interacts with RAB33B.

Its subcellular location is the cytoplasm. It is found in the cytosol. In terms of biological role, may play a role in regulating epithelial homeostasis in an ATG16L1-dependent manner. This chain is Protein Atg16l2 (ATG16L2), found in Homo sapiens (Human).